Reading from the N-terminus, the 1499-residue chain is Condensin complex subunit 1 (1499 aa).

Disordered stretches follow at residues Met1–Ser43 and Ile1421–Asp1499. Residues Pro1432–Ala1446 are compositionally biased toward low complexity. Acidic residues-rich tracts occupy residues Ser1458–Asp1467 and Ala1486–Asp1499.

This sequence belongs to the CND1 (condensin subunit 1) family. Component of the condensin I complex, which contains the mix-1/SMC2 and smc-4/SMC4 heterodimer, and three non SMC subunits that probably regulate the complex: dpy-26, capg-1 and dpy-28. Within the complex, interacts with dpy-26 and smc-4. Component of the dosage compensation complex, which consist of the condensin I like components mix-1/SMC2 and dpy-27/SMC4, and the three non SMC subunits dpy-26, capg-1 and dpy-28. Within the complex, interacts with mix-1, dpy-27, dpy-26 and capg-1. Interacts with smcl-1. In terms of processing, sumoylated. Sumoylated in the context of the dosage compensation complex but not in the condensin I complex. Sumoylation is important for assembly of the dosage compensation complex and its robust binding to the X chromosome. Expressed in somatic and germline tissues (at protein level).

It is found in the nucleus. The protein localises to the chromosome. Functionally, required for both chromosome condensation and segregation during mitosis and meiosis and X-chromosome dosage compensation depending on its binding partners. Regulatory subunit of the condensin I complex, a complex required for conversion of interphase chromatin into mitotic-like condense chromosomes. The condensin I complex probably introduces positive supercoils into relaxed DNA in the presence of type I topoisomerases and converts nicked DNA into positive knotted forms in the presence of type II topoisomerases. The condensin I complex function is required for proper chromosome segregation in mitosis and meiosis. As a member of the condensin I complex, further controls the crossover number and distribution in meiosis by restricting double strand break formation, possibly by influencing higher-order chromosome structure. Plays a role in robust cytokinesis upon presence of chromatin obstructions. Also a member of the condensin I-like dosage compensation complex that associates specifically with hermaphrodite X chromosomes to reduce their gene transcription during interphase, possibly through chromatin reorganization. The chain is Condensin complex subunit 1 from Caenorhabditis elegans.